The sequence spans 189 residues: HTH-type transcriptional repressor AcnR (189 aa).

The region spanning 10–70 is the HTH tetR-type domain; sequence AERKVEILSG…EVAHEDMRKM (61 aa). Positions 33–52 form a DNA-binding region, H-T-H motif; sequence TVARLEETIGKSRGAIFHHY. Residues 79 to 80, arginine 130, and glutamine 134 contribute to the citrate site; that span reads LI. Mg(2+) is bound at residue glutamate 181. Arginine 185 contributes to the citrate binding site.

As to quaternary structure, homodimer.

AcnR negatively controls the expression of the aconitase gene acn. In Corynebacterium jeikeium (strain K411), this protein is HTH-type transcriptional repressor AcnR.